The sequence spans 183 residues: Large ribosomal subunit protein uL5 (183 aa).

Belongs to the universal ribosomal protein uL5 family. In terms of assembly, part of the 50S ribosomal subunit; part of the 5S rRNA/L5/L18/L25 subcomplex. Contacts the 5S rRNA and the P site tRNA. Forms a bridge to the 30S subunit in the 70S ribosome.

Functionally, this is one of the proteins that bind and probably mediate the attachment of the 5S RNA into the large ribosomal subunit, where it forms part of the central protuberance. In the 70S ribosome it contacts protein S13 of the 30S subunit (bridge B1b), connecting the 2 subunits; this bridge is implicated in subunit movement. Contacts the P site tRNA; the 5S rRNA and some of its associated proteins might help stabilize positioning of ribosome-bound tRNAs. The protein is Large ribosomal subunit protein uL5 of Kosmotoga olearia (strain ATCC BAA-1733 / DSM 21960 / TBF 19.5.1).